The primary structure comprises 248 residues: 2,3-bisphosphoglycerate-dependent phosphoglycerate mutase (248 aa).

Substrate is bound by residues 8–15, 21–22, arginine 60, 87–90, lysine 98, 114–115, and 183–184; these read RHGESEWN, TG, ERHY, RR, and GN. The active-site Tele-phosphohistidine intermediate is the histidine 9. The Proton donor/acceptor role is filled by glutamate 87.

This sequence belongs to the phosphoglycerate mutase family. BPG-dependent PGAM subfamily.

It catalyses the reaction (2R)-2-phosphoglycerate = (2R)-3-phosphoglycerate. It participates in carbohydrate degradation; glycolysis; pyruvate from D-glyceraldehyde 3-phosphate: step 3/5. Its function is as follows. Catalyzes the interconversion of 2-phosphoglycerate and 3-phosphoglycerate. The chain is 2,3-bisphosphoglycerate-dependent phosphoglycerate mutase from Borrelia garinii subsp. bavariensis (strain ATCC BAA-2496 / DSM 23469 / PBi) (Borreliella bavariensis).